The following is a 275-amino-acid chain: 18S rRNA (guanine(1575)-N(7))-methyltransferase (275 aa).

The disordered stretch occupies residues 256–275; the sequence is RGRKVAKDSKFTGRKRRHRF. The Nuclear localization signal motif lies at 257–264; that stretch reads GRKVAKDS.

The protein belongs to the class I-like SAM-binding methyltransferase superfamily. BUD23/WBSCR22 family. As to quaternary structure, interacts with TRM112. Interacts with ECM16.

The protein resides in the cytoplasm. Its subcellular location is the nucleus. The catalysed reaction is guanosine(1575) in yeast 18S rRNA + S-adenosyl-L-methionine = N(7)-methylguanosine(1575) in yeast 18S rRNA + S-adenosyl-L-homocysteine. S-adenosyl-L-methionine-dependent methyltransferase that specifically methylates the N(7) position of guanine 1575 (m7G1575) in 18S rRNA. Requires the methyltransferase adapter protein TRM112 for full rRNA methyltransferase activity. Important for biogenesis end export of the 40S ribosomal subunit independent on its methyltransferase activity. Required for efficient cleavage of the primary 35S precursor rRNA at site A2. Involved in positioning the proximal bud pole signal. The polypeptide is 18S rRNA (guanine(1575)-N(7))-methyltransferase (BUD23) (Saccharomyces cerevisiae (strain ATCC 204508 / S288c) (Baker's yeast)).